The following is a 276-amino-acid chain: Diaminopimelate epimerase (276 aa).

The substrate site is built by N13, Q46, and N66. Residue C75 is the Proton donor of the active site. Substrate-binding positions include 76–77 (GN), N159, N192, and 210–211 (ER). Catalysis depends on C219, which acts as the Proton acceptor. Residue 220–221 (GT) participates in substrate binding.

This sequence belongs to the diaminopimelate epimerase family. As to quaternary structure, homodimer.

The protein resides in the cytoplasm. The enzyme catalyses (2S,6S)-2,6-diaminopimelate = meso-2,6-diaminopimelate. Its pathway is amino-acid biosynthesis; L-lysine biosynthesis via DAP pathway; DL-2,6-diaminopimelate from LL-2,6-diaminopimelate: step 1/1. In terms of biological role, catalyzes the stereoinversion of LL-2,6-diaminopimelate (L,L-DAP) to meso-diaminopimelate (meso-DAP), a precursor of L-lysine and an essential component of the bacterial peptidoglycan. This chain is Diaminopimelate epimerase, found in Aeromonas salmonicida (strain A449).